Consider the following 487-residue polypeptide: Serine/threonine-protein kinase 4 (487 aa).

Residue Met1 is modified to N-acetylmethionine. Thr3 carries the post-translational modification Phosphothreonine. A Protein kinase domain is found at 30–281; the sequence is FDVLEKLGEG…ATQLLQHPFV (252 aa). Residues 36–44 and Lys59 each bind ATP; that span reads LGEGSYGSV. Asp149 acts as the Proton acceptor in catalysis. Residue Thr183 is modified to Phosphothreonine; by autocatalysis. A Phosphoserine modification is found at Ser265. A coiled-coil region spans residues 289-311; the sequence is ILRDLINEAMDVKLKRQEAQQRE. The interval 305 to 334 is disordered; that stretch reads QEAQQREVDQDDEENSEEDEMDSGTMVRAA. Acidic residues predominate over residues 313–326; it reads DQDDEENSEEDEMD. Phosphoserine is present on Ser320. 2 positions are modified to phosphothreonine: Thr340 and Thr367. Thr387 bears the Phosphothreonine; by PKB/AKT1 mark. Ser410 is subject to Phosphoserine. Phosphotyrosine is present on Tyr433. The SARAH domain maps to 433–480; it reads YEFLKSWTVEDLQKRLLALDPMMEQEMEEIRQKYRSKRQPILDAIEAK.

Belongs to the protein kinase superfamily. STE Ser/Thr protein kinase family. STE20 subfamily. In terms of assembly, homodimer; mediated via the coiled-coil region. Interacts with NORE1, which inhibits autoactivation. Interacts with and stabilizes SAV1. Interacts with RASSF1. Interacts with FOXO3. Interacts with RASSF2 (via SARAH domain). Interacts with AR, PKB/AKT1, TNNI3 and SIRT1. Interacts with MARK3 and SCRIB in the presence of DLG5. Interacts with DLG5 (via PDZ domain 3). Requires Mg(2+) as cofactor. In terms of processing, autophosphorylated on serine and threonine residues. Phosphorylation at Thr-387 by PKB/AKT1, leads to inhibition of its: kinase activity, nuclear translocation and autophosphorylation at Thr-183. It also diminishes its cleavage by caspases and its ability to phosphorylate FOXO3. Post-translationally, proteolytically cleaved by caspase-3 during apoptosis at Asp-326 resulting in a 37 kDa form. Proteolytic cleavage results in kinase activation and nuclear translocation of the truncated form (MST1/N).

The protein localises to the cytoplasm. The protein resides in the nucleus. The catalysed reaction is L-seryl-[protein] + ATP = O-phospho-L-seryl-[protein] + ADP + H(+). It catalyses the reaction L-threonyl-[protein] + ATP = O-phospho-L-threonyl-[protein] + ADP + H(+). Its activity is regulated as follows. Inhibited by the C-terminal non-catalytic region. Activated by caspase-cleavage. Full activation also requires homodimerization and autophosphorylation of Thr-183. Activated by RASSF1 which acts by preventing its dephosphorylation. In terms of biological role, stress-activated, pro-apoptotic kinase which, following caspase-cleavage, enters the nucleus and induces chromatin condensation followed by internucleosomal DNA fragmentation. Key component of the Hippo signaling pathway which plays a pivotal role in organ size control and tumor suppression by restricting proliferation and promoting apoptosis. The core of this pathway is composed of a kinase cascade wherein STK3/MST2 and STK4/MST1, in complex with its regulatory protein SAV1, phosphorylates and activates LATS1/2 in complex with its regulatory protein MOB1, which in turn phosphorylates and inactivates YAP1 oncoprotein and WWTR1/TAZ. Phosphorylation of YAP1 by LATS2 inhibits its translocation into the nucleus to regulate cellular genes important for cell proliferation, cell death, and cell migration. STK3/MST2 and STK4/MST1 are required to repress proliferation of mature hepatocytes, to prevent activation of facultative adult liver stem cells (oval cells), and to inhibit tumor formation. Phosphorylates 'Ser-14' of histone H2B (H2BS14ph) during apoptosis. Phosphorylates FOXO3 upon oxidative stress, which results in its nuclear translocation and cell death initiation. Phosphorylates MOBKL1A, MOBKL1B and RASSF2. Phosphorylates TNNI3 (cardiac Tn-I) and alters its binding affinity to TNNC1 (cardiac Tn-C) and TNNT2 (cardiac Tn-T). Phosphorylates FOXO1 on 'Ser-212' and regulates its activation and stimulates transcription of PMAIP1 in a FOXO1-dependent manner. Phosphorylates SIRT1 and inhibits SIRT1-mediated p53/TP53 deacetylation, thereby promoting p53/TP53 dependent transcription and apoptosis upon DNA damage. Acts as an inhibitor of PKB/AKT1. Phosphorylates AR on 'Ser-650' and suppresses its activity by intersecting with PKB/AKT1 signaling and antagonizing formation of AR-chromatin complexes. The polypeptide is Serine/threonine-protein kinase 4 (Stk4) (Mus musculus (Mouse)).